Reading from the N-terminus, the 152-residue chain is Protein PLANT CADMIUM RESISTANCE 2 (152 aa).

Residues 57 to 79 traverse the membrane as a helical segment; that stretch reads TAGALYALIAVVTGCACIYSCFY.

It belongs to the cornifelin family. In terms of assembly, homooligomer. In terms of tissue distribution, expressed in roots, leaves, shoots, stems, flowers and siliques. In leaves, restricted mainly to the vascular tissue. Expressed in all cells in the root tip, in the vascular tissue and the epidermis in the elongation zone, and only in the epidermal cells in the root hair zone.

It localises to the cell membrane. Zinc transporter acting in both zinc extrusion and long-distance zinc transport. Involved in the loading of zinc into the xyleme and in the detoxification of excess zinc at the epidermal cells. Acts independently from the zinc transporters HMA2 and HMA4. May be also involved in cadmium resistance. This chain is Protein PLANT CADMIUM RESISTANCE 2 (PCR2), found in Arabidopsis thaliana (Mouse-ear cress).